A 171-amino-acid polypeptide reads, in one-letter code: Adenine phosphoribosyltransferase (171 aa).

Belongs to the purine/pyrimidine phosphoribosyltransferase family. In terms of assembly, homodimer.

Its subcellular location is the cytoplasm. The catalysed reaction is AMP + diphosphate = 5-phospho-alpha-D-ribose 1-diphosphate + adenine. It participates in purine metabolism; AMP biosynthesis via salvage pathway; AMP from adenine: step 1/1. In terms of biological role, catalyzes a salvage reaction resulting in the formation of AMP, that is energically less costly than de novo synthesis. In Ruminiclostridium cellulolyticum (strain ATCC 35319 / DSM 5812 / JCM 6584 / H10) (Clostridium cellulolyticum), this protein is Adenine phosphoribosyltransferase.